A 447-amino-acid chain; its full sequence is tRNA-2-methylthio-N(6)-dimethylallyladenosine synthase (447 aa).

The MTTase N-terminal domain maps to 3-120 (KKLYIKTNGC…LPALLNERLE (118 aa)). The [4Fe-4S] cluster site is built by C12, C49, C83, C157, C161, and C164. Positions 143–375 (RAEGPTAFVS…QNRLLMNAAR (233 aa)) constitute a Radical SAM core domain. A TRAM domain is found at 378-441 (ESMIGSKQKI…PNSLRGRLLE (64 aa)).

It belongs to the methylthiotransferase family. MiaB subfamily. Monomer. The cofactor is [4Fe-4S] cluster.

It localises to the cytoplasm. It catalyses the reaction N(6)-dimethylallyladenosine(37) in tRNA + (sulfur carrier)-SH + AH2 + 2 S-adenosyl-L-methionine = 2-methylsulfanyl-N(6)-dimethylallyladenosine(37) in tRNA + (sulfur carrier)-H + 5'-deoxyadenosine + L-methionine + A + S-adenosyl-L-homocysteine + 2 H(+). Catalyzes the methylthiolation of N6-(dimethylallyl)adenosine (i(6)A), leading to the formation of 2-methylthio-N6-(dimethylallyl)adenosine (ms(2)i(6)A) at position 37 in tRNAs that read codons beginning with uridine. The sequence is that of tRNA-2-methylthio-N(6)-dimethylallyladenosine synthase from Legionella pneumophila (strain Paris).